Reading from the N-terminus, the 342-residue chain is Flavanone 3-dioxygenase 2 (342 aa).

In terms of domain architecture, Fe2OG dioxygenase spans 193–293 (QEQHMAVNYY…RMSVASFLCP (101 aa)). Fe cation contacts are provided by histidine 217, aspartate 219, and histidine 274. Arginine 284 contacts 2-oxoglutarate.

The protein belongs to the iron/ascorbate-dependent oxidoreductase family. The cofactor is Fe(2+). It depends on L-ascorbate as a cofactor. In terms of tissue distribution, expressed in roots, leaves and stems. Expressed at low levels in seeds.

It catalyses the reaction a (2S)-flavan-4-one + 2-oxoglutarate + O2 = a (2R,3R)-dihydroflavonol + succinate + CO2. It participates in secondary metabolite biosynthesis; flavonoid biosynthesis. Catalyzes the 3-beta-hydroxylation of 2S-flavanones to 2R,3R-dihydroflavonols which are intermediates in the biosynthesis of flavonols, anthocyanidins, catechins and proanthocyanidins in plants. Converts (2S)-eriodictyol to (+)-taxifolin and (2S)-naringenin to (+)-(2R/3R)-dihydrokaempferol in vitro. This chain is Flavanone 3-dioxygenase 2, found in Oryza sativa subsp. japonica (Rice).